A 231-amino-acid polypeptide reads, in one-letter code: Ribonuclease 3 (231 aa).

Positions 7–135 (IQAIESKLNF…ILGAVYLDGG (129 aa)) constitute an RNase III domain. Residue E48 coordinates Mg(2+). Residue D52 is part of the active site. Mg(2+) is bound by residues N121 and E124. E124 is a catalytic residue. A DRBM domain is found at 160-229 (NPKNRLQQFT…AKQALSTHDN (70 aa)).

This sequence belongs to the ribonuclease III family. In terms of assembly, homodimer. It depends on Mg(2+) as a cofactor.

Its subcellular location is the cytoplasm. It catalyses the reaction Endonucleolytic cleavage to 5'-phosphomonoester.. In terms of biological role, digests double-stranded RNA. Involved in the processing of primary rRNA transcript to yield the immediate precursors to the large and small rRNAs (23S and 16S). Processes some mRNAs, and tRNAs when they are encoded in the rRNA operon. Processes pre-crRNA and tracrRNA of type II CRISPR loci if present in the organism. The sequence is that of Ribonuclease 3 from Chlamydia trachomatis serovar A (strain ATCC VR-571B / DSM 19440 / HAR-13).